The chain runs to 530 residues: Light-independent protochlorophyllide reductase subunit B (530 aa).

Position 36 (D36) interacts with [4Fe-4S] cluster. Catalysis depends on D287, which acts as the Proton donor. Residue 422 to 423 coordinates substrate; that stretch reads GL. The segment at 453-472 is disordered; sequence PAVQTASSEPQPSAIETPSA. Residues 454–463 are compositionally biased toward polar residues; the sequence is AVQTASSEPQ.

This sequence belongs to the ChlB/BchB/BchZ family. In terms of assembly, protochlorophyllide reductase is composed of three subunits; BchL, BchN and BchB. Forms a heterotetramer of two BchB and two BchN subunits. Requires [4Fe-4S] cluster as cofactor.

It carries out the reaction chlorophyllide a + oxidized 2[4Fe-4S]-[ferredoxin] + 2 ADP + 2 phosphate = protochlorophyllide a + reduced 2[4Fe-4S]-[ferredoxin] + 2 ATP + 2 H2O. The protein operates within porphyrin-containing compound metabolism; bacteriochlorophyll biosynthesis (light-independent). Functionally, component of the dark-operative protochlorophyllide reductase (DPOR) that uses Mg-ATP and reduced ferredoxin to reduce ring D of protochlorophyllide (Pchlide) to form chlorophyllide a (Chlide). This reaction is light-independent. The NB-protein (BchN-BchB) is the catalytic component of the complex. This Rhodopseudomonas palustris (strain BisB18) protein is Light-independent protochlorophyllide reductase subunit B.